Consider the following 775-residue polypeptide: Homeobox protein SIX4 (775 aa).

Residues 1–10 show a composition bias toward polar residues; that stretch reads MSSSSPTGQI. Disordered regions lie at residues 1–76 and 263–313; these read MSSS…AGAA and WFKN…DGVT. Ser-2 is subject to N-acetylserine. Residues 54–63 show a composition bias toward low complexity; that stretch reads EPGDAAAASR. The homeobox DNA-binding region spans 216-275; it reads GEETVYCFKEKSRNALKELYKQNRYPSPAEKRHLAKITGLSLTQVSNWFKNRRQRDRNPS. 2 stretches are compositionally biased toward basic and acidic residues: residues 271-283 and 292-301; these read DRNP…KSES and ESSKGHEDLS. Residues 582–775 form a transactivation domain region; sequence AQVNASLSSE…VQLDEDMQDL (194 aa). Residue Ser-634 is modified to Phosphoserine.

This sequence belongs to the SIX/Sine oculis homeobox family. In terms of assembly, interacts with EYA3; acts cooperatively with EYA3 to transactivate target genes through interaction and nuclear translocation of EYA3 protein. In terms of tissue distribution, mainly expressed in the skeletal muscle (isoform 1 and isoform 2 but not isoform 3), and weakly in the heart. Also found in the retina and the distal tube of kidney. Expressed in skeletal muscle, nasal epithelium, cochlea, parathyroid and salivary gland. Expressed in muscle satellite cells of normal and regenerating muscles.

The protein localises to the nucleus. It is found in the cytoplasm. In terms of biological role, transcriptional regulator which can act as both a transcriptional repressor and activator by binding a DNA sequence on these target genes and is involved in processes like cell differentiation, cell migration and cell survival. Transactivates gene expression by binding a 5'-[CAT]A[CT][CT][CTG]GA[GAT]-3' motif present in the Trex site and from a 5'-TCA[AG][AG]TTNC-3' motif present in the MEF3 site of the muscle-specific genes enhancer. Acts cooperatively with EYA proteins to transactivate their target genes through interaction and nuclear translocation of EYA protein. Acts synergistically with SIX1 to regulate target genes involved in formation of various organs, including muscle, kidney, gonad, ganglia, olfactory epithelium and cranial skeleton. Plays a role in several important steps of muscle development. Controls the genesis of hypaxial myogenic progenitors in the dermomyotome by transactivating PAX3 and the delamination and migration of the hypaxial precursors from the ventral lip to the limb buds through the transactivation of PAX3, MET and LBX1. Controls myoblast determination by transactivating MYF5, MYOD1 and MYF6. Controls somitic differentiation in myocyte through MYOG transactivation. Plays a role in synaptogenesis and sarcomere organization by participating in myofiber specialization during embryogenesis by activating fast muscle program in the primary myotome resulting in an up-regulation of fast muscle genes, including ATP2A1, MYL1 and TNNT3. Simultaneously, is also able to activate inhibitors of slow muscle genes, such as SOX6, HRASLS, and HDAC4, thereby restricting the activation of the slow muscle genes. During muscle regeneration, negatively regulates differentiation of muscle satellite cells through down-regulation of MYOG expression. During kidney development regulates the early stages of metanephros development and ureteric bud formation through regulation of GDNF, SALL1, PAX8 and PAX2 expression. Plays a role in gonad development by regulating both testis determination and size determination. In gonadal sex determination, transactivates ZFPM2 by binding a MEF3 consensus sequence, resulting in SRY up-regulation. In gonadal size determination, transactivates NR5A1 by binding a MEF3 consensus sequence resulting in gonadal precursor cell formation regulation. During olfactory development mediates the specification and patterning of olfactory placode through fibroblast growth factor and BMP4 signaling pathways and also regulates epithelial cell proliferation during placode formation. Promotes survival of sensory neurons during early trigeminal gangliogenesis. In the developing dorsal root ganglia, up-regulates SLC12A2 transcription. Regulates early thymus/parathyroid organogenesis through regulation of GCM2 and FOXN1 expression. Forms gustatory papillae during development of the tongue. Also plays a role during embryonic cranial skeleton morphogenesis. The chain is Homeobox protein SIX4 (Six4) from Mus musculus (Mouse).